The primary structure comprises 620 residues: MALLQIAEPGQSTVPHEHRLAAGIDLGTTNSLIASVQSGNASTLSDDQGRDILPSIVSYQAGNVLVGQTAQALSIEDAQNTITSAKRLIGRSLKDIQSKYPSLPYEFCGDENHPEIMTRQGAVNPVQVSAEILKSLNLRAQAALGGELTGVVITVPAHFDDAQRQSTKDAAKLAGVSVLRLLNEPTAAAVAYGLDSGQEGVIAVYDLGGGTFDISILRLNKGVFEVLATGGDSALGGDDFDVVLVDYLVEQAGLVRPLSPSLERQLMQQACFAKEQLTTKEEVDITISLDSDSDWKTSLTKAQLNKLISSLVNKTLRACRRTLKDADITIDEVIEVVMVGGSTRVPLVRSEVEKHFNKTPLTSIDPDKVVAIGAAIQADVLVGNKPDSDMLLLDVTPLSLGLETMGGLVEKVIPRNTTIPVAKAQEFTTFKDGQTAMAVHVLQGERELVEDCRSLARFELRGIPAMTAGAAHIRVTFKVDADGLLSVSAMEKSSGVESSIEVKPSFGLDDNQISQMIKDSMSNAADDMQARMLKEQQVEASRVIESVQAALLADSKLLNSDEITVIENAIKSLAQVSQGQEIKAIENALDKLNDSTAIFAERRMDSSISEALAGQAVDKI.

It belongs to the heat shock protein 70 family.

In terms of biological role, chaperone involved in the maturation of iron-sulfur cluster-containing proteins. Has a low intrinsic ATPase activity which is markedly stimulated by HscB. The polypeptide is Chaperone protein HscA homolog (Colwellia psychrerythraea (strain 34H / ATCC BAA-681) (Vibrio psychroerythus)).